Reading from the N-terminus, the 276-residue chain is Putative translation initiation factor eIF-2B subunit 2-like (276 aa).

It belongs to the eIF-2B alpha/beta/delta subunits family. As to quaternary structure, complex of two different subunits.

In terms of biological role, catalyzes the exchange of initiation factor 2-bound GDP for GTP. The chain is Putative translation initiation factor eIF-2B subunit 2-like from Pyrococcus abyssi (strain GE5 / Orsay).